Consider the following 235-residue polypeptide: NADH-quinone oxidoreductase subunit B 2 (235 aa).

The span at 1–14 shows a compositional bias: low complexity; sequence MGLTSRPTPASRQP. Residues 1–24 are disordered; it reads MGLTSRPTPASRQPASPPPADPVL. [4Fe-4S] cluster is bound by residues C63, C64, C129, and C159. The disordered stretch occupies residues 188–235; sequence TGATGGGPSTDALRSGLVAAPTAPGPTAPASTAPGPTAPAPTQDEERR.

It belongs to the complex I 20 kDa subunit family. In terms of assembly, NDH-1 is composed of 14 different subunits. Subunits NuoB, C, D, E, F, and G constitute the peripheral sector of the complex. The cofactor is [4Fe-4S] cluster.

Its subcellular location is the cell membrane. The catalysed reaction is a quinone + NADH + 5 H(+)(in) = a quinol + NAD(+) + 4 H(+)(out). NDH-1 shuttles electrons from NADH, via FMN and iron-sulfur (Fe-S) centers, to quinones in the respiratory chain. The immediate electron acceptor for the enzyme in this species is believed to be a menaquinone. Couples the redox reaction to proton translocation (for every two electrons transferred, four hydrogen ions are translocated across the cytoplasmic membrane), and thus conserves the redox energy in a proton gradient. The sequence is that of NADH-quinone oxidoreductase subunit B 2 from Streptomyces griseus subsp. griseus (strain JCM 4626 / CBS 651.72 / NBRC 13350 / KCC S-0626 / ISP 5235).